We begin with the raw amino-acid sequence, 404 residues long: Caspase b (404 aa).

Residues 1–171 (MEDITQLLSD…DIYTPRSGTQ (171 aa)) constitute a propeptide that is removed on maturation. In terms of domain architecture, Pyrin spans 8–80 (LSDVLEDLVE…LRKIKQNERA (73 aa)). Catalysis depends on residues H249 and C296. Positions 301-316 (SSGVLAQDSVFASDSW) are excised as a propeptide.

The protein belongs to the peptidase C14A family. As to quaternary structure, upon direct LPS-binding, forms large homooligomers, resulting in its activation. These oligomers are often referred to as 'non-canonical inflammasomes'. Heterotetramer that consists of two anti-parallel arranged heterodimers, each one formed by a 20 kDa (p20) and a 10 kDa (p10) subunit. Interacts with caspa. Interacts with pycard; the interaction only occurs in the presence of nlrp1. Component of NLRP1 inflammasomes. Inflammasomes are supramolecular complexes that assemble in the cytosol in response to pathogens and other damage-associated signals and play critical roles in innate immunity and inflammation. The NLRP1 inflammasome is composed of the signal sensor nlrp1, and the adapter pycard (asc), which recruit effector pro-inflammatory caspases caspa and/or caspb. The interaction between nlrp1 and pycard is required for the sequential recruitment of caspa and then caspb. Caspa is preferentially recruited first and this causes the cleavage of pro-il1b into the midformed il1b. This is followed by the recruitment of caspb, which is activated and cleaves the midformed il1b resulting in il1b maturation. The two subunits are derived from the precursor sequence by an autocatalytic mechanism. As to expression, expressed in the spleen, kidney and liver, and highly expressed in the gills and gut.

The protein localises to the inflammasome. It localises to the cytoplasm. The enzyme catalyses Strict requirement for Asp at the P1 position. It has a preferred cleavage sequence of Tyr-Val-Ala-Asp-|- but also cleaves at Asp-Glu-Val-Asp-|-.. Its activity is regulated as follows. Activated by homooligomerization induced by direct binding to cytosolic LPS. In terms of biological role, thiol protease which cleaves IL-1 beta (il1b), releasing the mature cytokine which is involved in a variety of inflammatory processes, and mediates apoptosis. Component of the NLRP1 inflammasome, which plays a crucial role in innate immunity and inflammation. In response to pathogens and other damage-associated signals, recruited to the NLRP1 inflammasome in its precursor form following the recruitment of caspase caspa. Its subsequent activation causes the cleavage of the midformed pro-il1b and results in il1b maturation and secretion in the extracellular milieu. Activated by direct binding to bacterial lipopolysaccharides (LPS), which causes non-canonical inflammasome activation and results in the pyroptosis of infected cells and their extrusion into the gut lumen, as well as in cytokine secretion. Plays a crucial role in the restriction of bacterial infection to intestinal sites. Pyroptosis limits bacterial replication, while cytokine secretion promotes the recruitment and activation of immune cells and triggers mucosal inflammation. Promotes pyroptosis by bacterial infection by E.piscicida. This chain is Caspase b, found in Danio rerio (Zebrafish).